The chain runs to 134 residues: UPF0412 protein YaaI (134 aa).

Positions Met1–Ala23 are cleaved as a signal peptide.

The protein belongs to the UPF0412 family.

This chain is UPF0412 protein YaaI, found in Escherichia coli O17:K52:H18 (strain UMN026 / ExPEC).